Here is a 262-residue protein sequence, read N- to C-terminus: Fibroin light chain (262 aa).

Residues M1 to A16 form the signal peptide. S19 bears the N-acetylserine; in short form mark. A disulfide bond links C101 and C160.

Silk fibroin elementary unit consists in a disulfide-linked heavy and light chain and a p25 glycoprotein in molar ratios of 6:6:1. This results in a complex of approximately 2.3 MDa. In terms of processing, the interchain disulfide bridge is essential for the intracellular transport and secretion of fibroin. Post-translationally, partially N-terminally processed to yield a short form which lacks the first two residues of the long form. As to expression, produced exclusively in the posterior (PSG) section of silk glands, which are essentially modified salivary glands.

The protein localises to the secreted. In terms of biological role, it is likely that the major role of L-chain is to prevent the retention of H-chain in ER by forming the disulfide linkage. In Bombyx mori (Silk moth), this protein is Fibroin light chain (FIBL).